Here is a 146-residue protein sequence, read N- to C-terminus: Large ribosomal subunit protein uL15 (146 aa).

A disordered region spans residues 1–58 (MNLSNLRAPKKANRNRKRVGRGMGSGHGKTSTRGHKGQRSRSGSRSMRGFEGGQMPLH). Composition is skewed to basic residues over residues 8 to 20 (APKKANRNRKRVG) and 30 to 39 (TSTRGHKGQR). The segment covering 40 to 49 (SRSGSRSMRG) has biased composition (low complexity).

The protein belongs to the universal ribosomal protein uL15 family. In terms of assembly, part of the 50S ribosomal subunit.

Its function is as follows. Binds to the 23S rRNA. The polypeptide is Large ribosomal subunit protein uL15 (Acidobacterium capsulatum (strain ATCC 51196 / DSM 11244 / BCRC 80197 / JCM 7670 / NBRC 15755 / NCIMB 13165 / 161)).